The sequence spans 381 residues: Selenoprotein P (381 aa).

The N-terminal stretch at 1–19 (MWRSLGLALALCLLPSGGT) is a signal peptide. The N-linked (GlcNAc...) asparagine glycan is linked to asparagine 46. A non-standard amino acid (selenocysteine) is located at residue selenocysteine 59. Asparagine 83 carries N-linked (GlcNAc...) (complex) asparagine glycosylation. Asparagine 119, asparagine 128, and asparagine 174 each carry an N-linked (GlcNAc...) asparagine glycan. A disordered region spans residues 200–268 (TPSPHYHHEH…ENRDMPASED (69 aa)). Over residues 204–216 (HYHHEHHHNHGHQ) the composition is skewed to basic residues. A compositionally biased stretch (polar residues) spans 218–230 (LGSSELSENQQPG). A compositionally biased stretch (basic residues) spans 243 to 255 (LHHHHKHKGQHRQ). Serine 266 is subject to Phosphoserine. 3 non-standard amino acids (selenocysteine) are found at residues selenocysteine 300, selenocysteine 318, and selenocysteine 330. Asparagine 338 carries an N-linked (GlcNAc...) asparagine glycan. Residues selenocysteine 345, selenocysteine 352, selenocysteine 367, selenocysteine 369, selenocysteine 376, and selenocysteine 378 are each a non-standard amino acid (selenocysteine). The tract at residues 355–381 (SQQLIPTEASASURUKNQAKKUEUPSN) is disordered.

It belongs to the selenoprotein P family. Post-translationally, phosphorylation sites are present in the extracellular medium. As to expression, made in the liver and heart and secreted into the plasma. It is also found in the kidney.

It localises to the secreted. In terms of biological role, might be responsible for some of the extracellular antioxidant defense properties of selenium or might be involved in the transport of selenium. May supply selenium to tissues such as brain and testis. This chain is Selenoprotein P, found in Homo sapiens (Human).